Reading from the N-terminus, the 86-residue chain is Large ribosomal subunit protein eL43 (86 aa).

4 residues coordinate Zn(2+): C38, C41, C57, and C60. The C4-type zinc-finger motif lies at C38–C60.

It belongs to the eukaryotic ribosomal protein eL43 family. Putative zinc-binding subfamily. In terms of assembly, part of the 50S ribosomal subunit. Zn(2+) is required as a cofactor.

Its function is as follows. Binds to the 23S rRNA. This Aeropyrum pernix (strain ATCC 700893 / DSM 11879 / JCM 9820 / NBRC 100138 / K1) protein is Large ribosomal subunit protein eL43.